A 186-amino-acid chain; its full sequence is Holliday junction branch migration complex subunit RuvA (186 aa).

The interval 1–63 (MNDYINGLLH…DNVFKYYGFK (63 aa)) is domain I. A domain II region spans residues 64-137 (NQLIRDLFEL…QKELFNNKIS (74 aa)). Position 137 (Ser137) is a region of interest, flexible linker. The domain III stretch occupies residues 137–186 (SDKKNKVITSLEKLGYKTKDIYKIIINIDEDMNIEDLTKYVLEQLSYLHN).

It belongs to the RuvA family. As to quaternary structure, homotetramer. Forms an RuvA(8)-RuvB(12)-Holliday junction (HJ) complex. HJ DNA is sandwiched between 2 RuvA tetramers; dsDNA enters through RuvA and exits via RuvB. An RuvB hexamer assembles on each DNA strand where it exits the tetramer. Each RuvB hexamer is contacted by two RuvA subunits (via domain III) on 2 adjacent RuvB subunits; this complex drives branch migration. In the full resolvosome a probable DNA-RuvA(4)-RuvB(12)-RuvC(2) complex forms which resolves the HJ.

The protein localises to the cytoplasm. In terms of biological role, the RuvA-RuvB-RuvC complex processes Holliday junction (HJ) DNA during genetic recombination and DNA repair, while the RuvA-RuvB complex plays an important role in the rescue of blocked DNA replication forks via replication fork reversal (RFR). RuvA specifically binds to HJ cruciform DNA, conferring on it an open structure. The RuvB hexamer acts as an ATP-dependent pump, pulling dsDNA into and through the RuvAB complex. HJ branch migration allows RuvC to scan DNA until it finds its consensus sequence, where it cleaves and resolves the cruciform DNA. This chain is Holliday junction branch migration complex subunit RuvA, found in Mycoplasma mycoides subsp. mycoides SC (strain CCUG 32753 / NCTC 10114 / PG1).